A 561-amino-acid polypeptide reads, in one-letter code: Carboxylesterase 4A (561 aa).

An N-terminal signal peptide occupies residues 1–20; sequence MRWILCWSLTLCLMAQTALG. Cys-88 and Cys-116 are oxidised to a cystine. Residue Asn-214 is glycosylated (N-linked (GlcNAc...) asparagine). Ser-221 acts as the Acyl-ester intermediate in catalysis. Cys-273 and Cys-284 are oxidised to a cystine. Asn-276 carries N-linked (GlcNAc...) asparagine glycosylation. Glu-353 acts as the Charge relay system in catalysis. N-linked (GlcNAc...) asparagine glycosylation occurs at Asn-388. The active-site Charge relay system is His-467.

Belongs to the type-B carboxylesterase/lipase family.

Its subcellular location is the secreted. Functionally, probable carboxylesterase. This chain is Carboxylesterase 4A (CES4A), found in Homo sapiens (Human).